Consider the following 545-residue polypeptide: Alpha-galactosidase A (545 aa).

Positions 1–31 (MIQGLESIMNQGTKRILLAATLAATPWQVYG) are cleaved as a signal peptide. A disulfide bond links C54 and C86. N-linked (GlcNAc...) asparagine glycans are attached at residues N57, N95, N101, and N131. A disulfide bridge links C134 with C164. D162 (nucleophile) is an active-site residue. The N-linked (GlcNAc...) asparagine glycan is linked to N211. The Proton donor role is filled by D220. 2 N-linked (GlcNAc...) asparagine glycosylation sites follow: N363 and N444. Residues 421 to 518 (CSSVVPTGLV…KNAKTDGCLT (98 aa)) form the Ricin B-type lectin domain. 2 disulfides stabilise this stretch: C438–C452 and C477–C490.

Belongs to the glycosyl hydrolase 27 family. A C-terminal Ser/Thr-rich region may provide possible sites for O-glycosylation.

The protein localises to the secreted. It catalyses the reaction Hydrolysis of terminal, non-reducing alpha-D-galactose residues in alpha-D-galactosides, including galactose oligosaccharides, galactomannans and galactolipids.. Its function is as follows. Hydrolyzes a variety of simple alpha-D-galactoside as well as more complex molecules such as oligosaccharides and polysaccharides. This chain is Alpha-galactosidase A (aglA), found in Aspergillus niger.